Consider the following 198-residue polypeptide: Holliday junction resolvase RecU (198 aa).

Positions 1–29 are disordered; sequence MIRYPNGKSYQPKTAASSLQKKPSYSNRG. A compositionally biased stretch (polar residues) spans 8–29; sequence KSYQPKTAASSLQKKPSYSNRG. Residues Thr-83, Asp-85, Glu-98, and Gln-117 each coordinate Mg(2+).

The protein belongs to the RecU family. Mg(2+) is required as a cofactor.

The protein resides in the cytoplasm. The catalysed reaction is Endonucleolytic cleavage at a junction such as a reciprocal single-stranded crossover between two homologous DNA duplexes (Holliday junction).. Endonuclease that resolves Holliday junction intermediates in genetic recombination. Cleaves mobile four-strand junctions by introducing symmetrical nicks in paired strands. Promotes annealing of linear ssDNA with homologous dsDNA. Required for DNA repair, homologous recombination and chromosome segregation. The sequence is that of Holliday junction resolvase RecU from Bacillus licheniformis (strain ATCC 14580 / DSM 13 / JCM 2505 / CCUG 7422 / NBRC 12200 / NCIMB 9375 / NCTC 10341 / NRRL NRS-1264 / Gibson 46).